Here is a 63-residue protein sequence, read N- to C-terminus: U-reduvitoxin-Pr9a (63 aa).

The signal sequence occupies residues 1 to 19 (MRFFSLFTFLVAFIAAALA). Residues 20 to 42 (APVEIGEDLFALRPTGAKRDIIL) constitute a propeptide that is removed on maturation. C47 and C60 form a disulfide bridge.

Expressed by the venom gland.

It localises to the secreted. The chain is U-reduvitoxin-Pr9a from Platymeris rhadamanthus (Red spot assassin bug).